The sequence spans 447 residues: Phosphoglucosamine mutase (447 aa).

Catalysis depends on S102, which acts as the Phosphoserine intermediate. S102, D241, D243, and D245 together coordinate Mg(2+). Residue S102 is modified to Phosphoserine.

It belongs to the phosphohexose mutase family. Requires Mg(2+) as cofactor. In terms of processing, activated by phosphorylation.

It catalyses the reaction alpha-D-glucosamine 1-phosphate = D-glucosamine 6-phosphate. Functionally, catalyzes the conversion of glucosamine-6-phosphate to glucosamine-1-phosphate. The sequence is that of Phosphoglucosamine mutase from Pseudomonas syringae pv. tomato (strain ATCC BAA-871 / DC3000).